The chain runs to 387 residues: UDP-N-acetylglucosamine--N-acetylmuramyl-(pentapeptide) pyrophosphoryl-undecaprenol N-acetylglucosamine transferase (387 aa).

Residues 14-16 (TGG), Asn124, Arg167, Ser195, and Gln296 each bind UDP-N-acetyl-alpha-D-glucosamine. The segment at 366–387 (LPQQNSIEEDSTFEKNQEGAVA) is disordered. The span at 377–387 (TFEKNQEGAVA) shows a compositional bias: basic and acidic residues.

This sequence belongs to the glycosyltransferase 28 family. MurG subfamily.

Its subcellular location is the cell inner membrane. The catalysed reaction is di-trans,octa-cis-undecaprenyl diphospho-N-acetyl-alpha-D-muramoyl-L-alanyl-D-glutamyl-meso-2,6-diaminopimeloyl-D-alanyl-D-alanine + UDP-N-acetyl-alpha-D-glucosamine = di-trans,octa-cis-undecaprenyl diphospho-[N-acetyl-alpha-D-glucosaminyl-(1-&gt;4)]-N-acetyl-alpha-D-muramoyl-L-alanyl-D-glutamyl-meso-2,6-diaminopimeloyl-D-alanyl-D-alanine + UDP + H(+). It functions in the pathway cell wall biogenesis; peptidoglycan biosynthesis. Its function is as follows. Cell wall formation. Catalyzes the transfer of a GlcNAc subunit on undecaprenyl-pyrophosphoryl-MurNAc-pentapeptide (lipid intermediate I) to form undecaprenyl-pyrophosphoryl-MurNAc-(pentapeptide)GlcNAc (lipid intermediate II). The sequence is that of UDP-N-acetylglucosamine--N-acetylmuramyl-(pentapeptide) pyrophosphoryl-undecaprenol N-acetylglucosamine transferase from Zymomonas mobilis subsp. mobilis (strain ATCC 31821 / ZM4 / CP4).